Consider the following 343-residue polypeptide: Sorbitol dehydrogenase (343 aa).

A disordered region spans residues 1-26 (MKALVKTQHGTGHFAVQEKPEPTPGK). Residues Cys-39, His-60, and Glu-61 each coordinate Zn(2+). Glu-146 provides a ligand contact to substrate. Residues Ile-174, Arg-200, and 262–264 (VGL) each bind NAD(+).

It belongs to the zinc-containing alcohol dehydrogenase family. Homotetramer. The cofactor is Zn(2+).

The catalysed reaction is keto-D-fructose + NADH + H(+) = D-sorbitol + NAD(+). The enzyme catalyses xylitol + NAD(+) = D-xylulose + NADH + H(+). It carries out the reaction L-iditol + NAD(+) = keto-L-sorbose + NADH + H(+). Functionally, polyol dehydrogenase that catalyzes the NAD(+)-dependent oxidation of various sugar alcohols. Is active with D-sorbitol (D-glucitol), xylitol and L-iditol as substrates, leading to the C2-oxidized products D-fructose, D-xylulose and L-sorbose, respectively. The chain is Sorbitol dehydrogenase (gutB) from Halalkalibacterium halodurans (strain ATCC BAA-125 / DSM 18197 / FERM 7344 / JCM 9153 / C-125) (Bacillus halodurans).